The chain runs to 134 residues: Small ribosomal subunit protein uS8c (134 aa).

It belongs to the universal ribosomal protein uS8 family. In terms of assembly, part of the 30S ribosomal subunit.

The protein localises to the plastid. It is found in the chloroplast. One of the primary rRNA binding proteins, it binds directly to 16S rRNA central domain where it helps coordinate assembly of the platform of the 30S subunit. The sequence is that of Small ribosomal subunit protein uS8c (rps8) from Daucus carota (Wild carrot).